Reading from the N-terminus, the 221-residue chain is GTP-binding nuclear protein Ran-1 (221 aa).

One can recognise a Small GTPase Ran-type domain in the interval 10-174 (DYPSFKLVIV…LYLARKLAGD (165 aa)). Position 21 to 28 (21 to 28 (DGGTGKTT)) interacts with GTP. Residues 40–48 (KKYEPTIGV) are switch-I. Residues G71, 125 to 128 (NKVD), and 153 to 155 (SAK) contribute to the GTP site. Residues 71–87 (GQEKFGGLRDGYYIHGQ) form a switch-II region.

Belongs to the small GTPase superfamily. Ran family. In terms of assembly, found in a nuclear export complex with RanGTP, exportin and pre-miRNA.

It localises to the nucleus. Its function is as follows. GTP-binding protein involved in nucleocytoplasmic transport. Required for the import of protein into the nucleus and also for RNA export. Involved in chromatin condensation and control of cell cycle. This is GTP-binding nuclear protein Ran-1 (RAN1) from Oryza sativa subsp. indica (Rice).